The sequence spans 416 residues: Glutamate dehydrogenase A2 (416 aa).

K105 is an active-site residue.

Belongs to the Glu/Leu/Phe/Val dehydrogenases family. As to quaternary structure, homohexamer.

This Halobacterium salinarum (strain ATCC 700922 / JCM 11081 / NRC-1) (Halobacterium halobium) protein is Glutamate dehydrogenase A2 (gdhA2).